Reading from the N-terminus, the 579-residue chain is Nuclear hormone receptor family member nhr-47 (579 aa).

Positions 8-83 form a DNA-binding region, nuclear receptor; it reads GTLCAVCDDI…VGMDKNSIQN (76 aa). 2 consecutive NR C4-type zinc fingers follow at residues 11–31 and 47–71; these read CAVC…CNGC and CQGN…LQKC. Positions 87–128 are disordered; the sequence is RIGYTKRKRRHDDNDMEGGVHHSEHIRDGSSGSPQMNDESPE. The segment covering 104 to 114 has biased composition (basic and acidic residues); sequence GGVHHSEHIRD. One can recognise an NR LBD domain in the interval 164-553; that stretch reads ADLHSYATLE…SLVKETSLGP (390 aa).

Belongs to the nuclear hormone receptor family.

It is found in the nucleus. Its function is as follows. Orphan nuclear receptor. The polypeptide is Nuclear hormone receptor family member nhr-47 (nhr-47) (Caenorhabditis elegans).